The following is a 371-amino-acid chain: RNA-binding protein 48 (371 aa).

The RRM domain occupies 46 to 124 (QYLLIQGVPA…GLLHVCYAPE (79 aa)). 2 disordered regions span residues 220–249 (EHTD…AFPP) and 343–371 (EVTS…RRRI).

Belongs to the RBM48 family. Component of the minor spliceosome. Within this complex, interacts with ARMC7 and PRPF8/PRP8.

Its function is as follows. As a component of the minor spliceosome, involved in the splicing of U12-type introns in pre-mRNAs. This chain is RNA-binding protein 48 (Rbm48), found in Rattus norvegicus (Rat).